The chain runs to 244 residues: Eukaryotic translation initiation factor 6 (244 aa).

A phosphoserine; by CK1 mark is found at S174 and S175.

The protein belongs to the eIF-6 family. In terms of assembly, monomer. Associates with the 60S ribosomal subunit. Post-translationally, phosphorylation at Ser-174 and Ser-175 promotes nuclear export.

It is found in the cytoplasm. The protein localises to the nucleus. The protein resides in the nucleolus. In terms of biological role, binds to the 60S ribosomal subunit and prevents its association with the 40S ribosomal subunit to form the 80S initiation complex in the cytoplasm. Is also involved in ribosome biogenesis. Associates with pre-60S subunits in the nucleus and is involved in its nuclear export. This is Eukaryotic translation initiation factor 6 (tif6) from Schizosaccharomyces pombe (strain 972 / ATCC 24843) (Fission yeast).